A 344-amino-acid chain; its full sequence is Anthranilate phosphoribosyltransferase (344 aa).

Residues G80, 83–84, T88, 90–93, 108–116, and S120 contribute to the 5-phospho-alpha-D-ribose 1-diphosphate site; these read GD, NVST, and KHGNRSVSS. G80 contacts anthranilate. S92 contributes to the Mg(2+) binding site. N111 lines the anthranilate pocket. An anthranilate-binding site is contributed by R166. The Mg(2+) site is built by D225 and E226.

It belongs to the anthranilate phosphoribosyltransferase family. As to quaternary structure, homodimer. Requires Mg(2+) as cofactor.

It carries out the reaction N-(5-phospho-beta-D-ribosyl)anthranilate + diphosphate = 5-phospho-alpha-D-ribose 1-diphosphate + anthranilate. Its pathway is amino-acid biosynthesis; L-tryptophan biosynthesis; L-tryptophan from chorismate: step 2/5. Functionally, catalyzes the transfer of the phosphoribosyl group of 5-phosphorylribose-1-pyrophosphate (PRPP) to anthranilate to yield N-(5'-phosphoribosyl)-anthranilate (PRA). This is Anthranilate phosphoribosyltransferase from Legionella pneumophila (strain Corby).